Consider the following 195-residue polypeptide: 4'-phosphopantetheinyl transferase AcpT (195 aa).

It belongs to the P-Pant transferase superfamily. Gsp/Sfp/HetI/AcpT family.

It carries out the reaction apo-[ACP] + CoA = holo-[ACP] + adenosine 3',5'-bisphosphate + H(+). Its function is as follows. May be involved in an alternative pathway for phosphopantetheinyl transfer and holo-ACP synthesis in E.coli. The native apo-protein substrate is unknown. Is able to functionally replace AcpS in vivo but only when expressed at high levels. In Escherichia coli O157:H7, this protein is 4'-phosphopantetheinyl transferase AcpT (acpT).